Consider the following 89-residue polypeptide: Defensin-like protein 147 (89 aa).

The signal sequence occupies residues 1–24 (MKKIFQLSFTVFIIFISLVLGVVG). 4 cysteine pairs are disulfide-bonded: C34–C82, C46–C66, C51–C79, and C55–C81.

The protein belongs to the DEFL family. In terms of tissue distribution, expressed in flower buds, but not in stems, roots or rosette leaves.

It localises to the secreted. The sequence is that of Defensin-like protein 147 (LCR1) from Arabidopsis thaliana (Mouse-ear cress).